A 291-amino-acid chain; its full sequence is Beta-lactamase CTX-M-97 (291 aa).

A signal peptide spans 1–28; the sequence is MMTQSIGRSMLTVMATLPLLFSSATLHA. The Acyl-ester intermediate role is filled by serine 73. 237 to 239 provides a ligand contact to substrate; sequence KTG.

This sequence belongs to the class-A beta-lactamase family.

The enzyme catalyses a beta-lactam + H2O = a substituted beta-amino acid. Functionally, is probably capable of hydrolyzing cephalosporins such as ceftriaxone and ceftazidime, thus conferring resistance to these antibiotics. The sequence is that of Beta-lactamase CTX-M-97 (bla) from Escherichia coli.